The following is a 711-amino-acid chain: Putative DNA topoisomerase 3 (711 aa).

In terms of domain architecture, Toprim spans Lys2 to Thr135. Mg(2+) is bound by residues Glu8 and Asp104. The Topo IA-type catalytic domain occupies Tyr152 to Val580. The segment at Ser186–Gln191 is interaction with DNA. Tyr305 acts as the O-(5'-phospho-DNA)-tyrosine intermediate in catalysis. Positions Met691–Leu711 are disordered.

The protein belongs to the type IA topoisomerase family. Mg(2+) is required as a cofactor.

It catalyses the reaction ATP-independent breakage of single-stranded DNA, followed by passage and rejoining.. Releases the supercoiling and torsional tension of DNA, which is introduced during the DNA replication and transcription, by transiently cleaving and rejoining one strand of the DNA duplex. Introduces a single-strand break via transesterification at a target site in duplex DNA. The scissile phosphodiester is attacked by the catalytic tyrosine of the enzyme, resulting in the formation of a DNA-(5'-phosphotyrosyl)-enzyme intermediate and the expulsion of a 3'-OH DNA strand. The free DNA strand then undergoes passage around the unbroken strand, thus removing DNA supercoils. Finally, in the religation step, the DNA 3'-OH attacks the covalent intermediate to expel the active-site tyrosine and restore the DNA phosphodiester backbone. The sequence is that of Putative DNA topoisomerase 3 from Staphylococcus aureus (strain bovine RF122 / ET3-1).